The chain runs to 471 residues: Argininosuccinate lyase (471 aa).

This sequence belongs to the lyase 1 family. Argininosuccinate lyase subfamily.

The protein resides in the cytoplasm. It catalyses the reaction 2-(N(omega)-L-arginino)succinate = fumarate + L-arginine. Its pathway is amino-acid biosynthesis; L-arginine biosynthesis; L-arginine from L-ornithine and carbamoyl phosphate: step 3/3. This is Argininosuccinate lyase from Cereibacter sphaeroides (strain ATCC 17025 / ATH 2.4.3) (Rhodobacter sphaeroides).